The following is a 99-amino-acid chain: UPF0751 protein BAMEG_A0107 (99 aa).

Belongs to the UPF0751 family.

In Bacillus anthracis (strain CDC 684 / NRRL 3495), this protein is UPF0751 protein BAMEG_A0107.